A 482-amino-acid chain; its full sequence is tRNA sulfurtransferase (482 aa).

A THUMP domain is found at 61–165 (NQVLTAVTHT…NEKLNLVIAR (105 aa)). ATP contacts are provided by residues 183–184 (LI), Lys265, Gly287, and Gln296. A disulfide bridge connects residues Cys344 and Cys456. The 79-residue stretch at 404–482 (LGSDVVVLDI…GYKNVKVYRP (79 aa)) folds into the Rhodanese domain. The active-site Cysteine persulfide intermediate is the Cys456.

It belongs to the ThiI family.

It localises to the cytoplasm. The enzyme catalyses [ThiI sulfur-carrier protein]-S-sulfanyl-L-cysteine + a uridine in tRNA + 2 reduced [2Fe-2S]-[ferredoxin] + ATP + H(+) = [ThiI sulfur-carrier protein]-L-cysteine + a 4-thiouridine in tRNA + 2 oxidized [2Fe-2S]-[ferredoxin] + AMP + diphosphate. It catalyses the reaction [ThiS sulfur-carrier protein]-C-terminal Gly-Gly-AMP + S-sulfanyl-L-cysteinyl-[cysteine desulfurase] + AH2 = [ThiS sulfur-carrier protein]-C-terminal-Gly-aminoethanethioate + L-cysteinyl-[cysteine desulfurase] + A + AMP + 2 H(+). It functions in the pathway cofactor biosynthesis; thiamine diphosphate biosynthesis. In terms of biological role, catalyzes the ATP-dependent transfer of a sulfur to tRNA to produce 4-thiouridine in position 8 of tRNAs, which functions as a near-UV photosensor. Also catalyzes the transfer of sulfur to the sulfur carrier protein ThiS, forming ThiS-thiocarboxylate. This is a step in the synthesis of thiazole, in the thiamine biosynthesis pathway. The sulfur is donated as persulfide by IscS. The protein is tRNA sulfurtransferase of Aliivibrio salmonicida (strain LFI1238) (Vibrio salmonicida (strain LFI1238)).